Here is a 1130-residue protein sequence, read N- to C-terminus: Putative beta-hexosaminidase (1130 aa).

A signal peptide spans Met-1–Ser-23. Low complexity-rich tracts occupy residues Pro-1001–Gln-1030 and Leu-1037–Gly-1072. 2 disordered regions span residues Pro-1001 to Pro-1075 and Gln-1102 to Gly-1130.

The protein belongs to the glycosyl hydrolase 20 family. In terms of tissue distribution, prismatic layer of shell (at protein level). Expressed primarily in the mantle with highest level in the mantle edge and lower level in the mantle pallium.

It is found in the secreted. The catalysed reaction is Hydrolysis of terminal non-reducing N-acetyl-D-hexosamine residues in N-acetyl-beta-D-hexosaminides.. The protein operates within glycan degradation; chitin degradation. The sequence is that of Putative beta-hexosaminidase from Pinctada maxima (Silver-lipped pearl oyster).